We begin with the raw amino-acid sequence, 164 residues long: NADH-quinone oxidoreductase subunit I (164 aa).

4Fe-4S ferredoxin-type domains are found at residues leucine 55–glutamate 85 and threonine 95–asparagine 124. [4Fe-4S] cluster is bound by residues cysteine 65, cysteine 68, cysteine 71, cysteine 75, cysteine 104, cysteine 107, cysteine 110, and cysteine 114.

The protein belongs to the complex I 23 kDa subunit family. NDH-1 is composed of 14 different subunits. Subunits NuoA, H, J, K, L, M, N constitute the membrane sector of the complex. The cofactor is [4Fe-4S] cluster.

The protein resides in the cell inner membrane. The catalysed reaction is a quinone + NADH + 5 H(+)(in) = a quinol + NAD(+) + 4 H(+)(out). Its function is as follows. NDH-1 shuttles electrons from NADH, via FMN and iron-sulfur (Fe-S) centers, to quinones in the respiratory chain. The immediate electron acceptor for the enzyme in this species is believed to be ubiquinone. Couples the redox reaction to proton translocation (for every two electrons transferred, four hydrogen ions are translocated across the cytoplasmic membrane), and thus conserves the redox energy in a proton gradient. This is NADH-quinone oxidoreductase subunit I from Jannaschia sp. (strain CCS1).